The primary structure comprises 375 residues: Saccharopine dehydrogenase [NAD(+), L-lysine-forming] (375 aa).

L-saccharopine is bound by residues R18 and K78. The Proton acceptor role is filled by K78. Catalysis depends on H96, which acts as the Proton donor. Q101 provides a ligand contact to L-saccharopine. R130 is a binding site for NAD(+). The L-saccharopine site is built by R131 and F135. NAD(+) contacts are provided by residues 203-204, D227, T231, Y252, and V279; that span reads GR. Cysteines 205 and 250 form a disulfide. Position 280–282 (280–282) interacts with L-saccharopine; it reads SAD. 322-325 serves as a coordination point for NAD(+); that stretch reads IDHL.

It belongs to the AlaDH/PNT family. Monomer.

It catalyses the reaction L-saccharopine + NAD(+) + H2O = L-lysine + 2-oxoglutarate + NADH + H(+). It functions in the pathway amino-acid biosynthesis; L-lysine biosynthesis via AAA pathway; L-lysine from L-alpha-aminoadipate (fungal route): step 3/3. Catalyzes the NAD(+)-dependent cleavage of saccharopine to L-lysine and 2-oxoglutarate, the final step in the alpha-aminoadipate (AAA) pathway for lysin biosynthesis. The protein is Saccharopine dehydrogenase [NAD(+), L-lysine-forming] of Emericella nidulans (strain FGSC A4 / ATCC 38163 / CBS 112.46 / NRRL 194 / M139) (Aspergillus nidulans).